Here is a 155-residue protein sequence, read N- to C-terminus: Small ribosomal subunit protein uS17 (155 aa).

Position 2 is an N-acetylalanine (alanine 2).

Belongs to the universal ribosomal protein uS17 family.

The polypeptide is Small ribosomal subunit protein uS17 (Drosophila pseudoobscura pseudoobscura (Fruit fly)).